A 292-amino-acid chain; its full sequence is 4-hydroxy-tetrahydrodipicolinate synthase (292 aa).

T45 is a pyruvate binding site. The Proton donor/acceptor role is filled by Y133. The Schiff-base intermediate with substrate role is filled by K161. Residue I203 participates in pyruvate binding.

Belongs to the DapA family. As to quaternary structure, homotetramer; dimer of dimers.

It is found in the cytoplasm. It catalyses the reaction L-aspartate 4-semialdehyde + pyruvate = (2S,4S)-4-hydroxy-2,3,4,5-tetrahydrodipicolinate + H2O + H(+). Its pathway is amino-acid biosynthesis; L-lysine biosynthesis via DAP pathway; (S)-tetrahydrodipicolinate from L-aspartate: step 3/4. Functionally, catalyzes the condensation of (S)-aspartate-beta-semialdehyde [(S)-ASA] and pyruvate to 4-hydroxy-tetrahydrodipicolinate (HTPA). The protein is 4-hydroxy-tetrahydrodipicolinate synthase of Escherichia fergusonii (strain ATCC 35469 / DSM 13698 / CCUG 18766 / IAM 14443 / JCM 21226 / LMG 7866 / NBRC 102419 / NCTC 12128 / CDC 0568-73).